A 215-amino-acid chain; its full sequence is Pyrrolidone-carboxylate peptidase (215 aa).

Catalysis depends on residues Glu80, Cys143, and His167.

The protein belongs to the peptidase C15 family. In terms of assembly, homotetramer.

It localises to the cytoplasm. The enzyme catalyses Release of an N-terminal pyroglutamyl group from a polypeptide, the second amino acid generally not being Pro.. Removes 5-oxoproline from various penultimate amino acid residues except L-proline. The chain is Pyrrolidone-carboxylate peptidase from Bacillus cereus (strain ATCC 10987 / NRS 248).